We begin with the raw amino-acid sequence, 89 residues long: MANHKSAIKRHRQSVERAGRNRAARTRVKNAIKQVRTAITGSDKAQAGEALVAATSVLSKAASKGAMHWKKAARKISRLARAVNSIEAQ.

Residues 1-12 (MANHKSAIKRHR) are compositionally biased toward basic residues. A disordered region spans residues 1 to 26 (MANHKSAIKRHRQSVERAGRNRAART).

This sequence belongs to the bacterial ribosomal protein bS20 family.

Functionally, binds directly to 16S ribosomal RNA. The chain is Small ribosomal subunit protein bS20 from Desulfovibrio desulfuricans (strain ATCC 27774 / DSM 6949 / MB).